We begin with the raw amino-acid sequence, 178 residues long: Caveolin-1 (178 aa).

The residue at position 2 (S2) is an N-acetylserine. S2 carries the phosphoserine modification. Positions 2–94 (SGGKYVDSEG…WKASFTTFTV (93 aa)) are required for homooligomerization. Topologically, residues 2 to 104 (SGGKYVDSEG…TKYWFYRLLS (103 aa)) are cytoplasmic. The residue at position 5 (K5) is an N6-acetyllysine; alternate. K5 participates in a covalent cross-link: Glycyl lysine isopeptide (Lys-Gly) (interchain with G-Cter in ubiquitin); alternate. At Y6 the chain carries Phosphotyrosine. A Phosphoserine modification is found at S9. Y14 bears the Phosphotyrosine; by ABL1 mark. Y25 bears the Phosphotyrosine mark. Residues K26 and K30 each participate in a glycyl lysine isopeptide (Lys-Gly) (interchain with G-Cter in ubiquitin) cross-link. S37 is modified (phosphoserine). Residues K39, K47, and K57 each participate in a glycyl lysine isopeptide (Lys-Gly) (interchain with G-Cter in ubiquitin) cross-link. The interval 82–94 (DGIWKASFTTFTV) is interaction with CAVIN3. An intramembrane region (helical) is located at residues 105–125 (ALFGIPMALIWGIYFAILSFL). Topologically, residues 126–178 (HIWAVVPCIKSFLIEIQCISRVYSIYVHTVCDPLFEAVGKIFSNVRINLQKEI) are cytoplasmic. The tract at residues 131–142 (VPCIKSFLIEIQ) is interacts with SPRY1, SPRY2, SPRY3 and SPRY4. S-palmitoyl cysteine attachment occurs at residues C133, C143, and C156. The interval 149–160 (SIYVHTVCDPLF) is interacts with SPRY1, SPRY2, and SPRY4. Residues 167-178 (FSNVRINLQKEI) form an interacts with SPRY1, SPRY2, SPRY3 and SPRY4 region.

The protein belongs to the caveolin family. As to quaternary structure, homooligomer. Interacts with GLIPR2. Interacts with NOSTRIN. Interacts with SNAP25 and STX1A. Interacts (via the N-terminus) with DPP4; the interaction is direct. Interacts with CTNNB1, CDH1 and JUP. Interacts with PACSIN2; this interaction induces membrane tubulation. Interacts with SLC7A9. Interacts with BMX and BTK. Interacts with TGFBR1. Interacts with CAVIN3 (via leucine-zipper domain) in a cholesterol-sensitive manner. Interacts with CAVIN1. Interacts with EHD2 in a cholesterol-dependent manner. Forms a ternary complex with UBXN6 and VCP; mediates CAV1 targeting to lysosomes for degradation. Interacts with ABCG1; this interaction regulates ABCG1-mediated cholesterol efflux. Interacts with NEU3; this interaction enhances NEU3 sialidase activity within caveola. Interacts (via C-terminus) with SPRY1, SPRY2 (via C-terminus), SPRY3, and SPRY4. Interacts with IGFBP5; this interaction allows trafficking of IGFBP5 from the plasma membrane to the nucleus. In terms of processing, phosphorylated at Tyr-14 by ABL1 in response to oxidative stress. Post-translationally, ubiquitinated. Undergo monoubiquitination and multi- and/or polyubiquitination. Monoubiquitination of N-terminal lysines promotes integration in a ternary complex with UBXN6 and VCP which promotes oligomeric CAV1 targeting to lysosomes for degradation. Ubiquitinated by ZNRF1; leading to degradation and modulation of the TLR4-mediated immune response.

It localises to the golgi apparatus membrane. Its subcellular location is the cell membrane. The protein resides in the membrane. The protein localises to the caveola. It is found in the membrane raft. In terms of biological role, may act as a scaffolding protein within caveolar membranes. Forms a stable heterooligomeric complex with CAV2 that targets to lipid rafts and drives caveolae formation. Mediates the recruitment of CAVIN proteins (CAVIN1/2/3/4) to the caveolae. Interacts directly with G-protein alpha subunits and can functionally regulate their activity. Involved in the costimulatory signal essential for T-cell receptor (TCR)-mediated T-cell activation. Its binding to DPP4 induces T-cell proliferation and NF-kappa-B activation in a T-cell receptor/CD3-dependent manner. Recruits CTNNB1 to caveolar membranes and may regulate CTNNB1-mediated signaling through the Wnt pathway. Negatively regulates TGFB1-mediated activation of SMAD2/3 by mediating the internalization of TGFBR1 from membrane rafts leading to its subsequent degradation. Binds 20(S)-hydroxycholesterol (20(S)-OHC). In Pongo abelii (Sumatran orangutan), this protein is Caveolin-1 (CAV1).